Here is a 617-residue protein sequence, read N- to C-terminus: Vacuolar protein sorting-associated protein 33A (617 aa).

The disordered stretch occupies residues 268 to 287 (NFPSDGALPGGGGSGPRVEE).

The protein belongs to the STXBP/unc-18/SEC1 family. Component of the class C core vacuole/endosome tethering (CORVET) complex composed of at least Vps8, dor/Vps18, car/Vps33A and Vps16A; unlike in other species, Vps11 is not part of the Drosophila complex. Due to the reduced number of components the Drosophila CORVET complex is often referred to as the miniCORVET complex. Interacts with ema. Component of the homotypic fusion and vacuole protein sorting (HOPS) complex, composed of Vps16A, car/Vps33A, dor/Vps18, Vps39, Vps11 and lt/Vps41. The tethering complex core made up of Vps16A, car/Vps33A and dor/Vps18 and shared by both HOPS and CORVET, preferentially associates with CORVET specific Vps8 over HOPS specific lt/Vps41. Interacts with Syx17 (via SNARE domain); the interaction requires Vps16A, may involve additional components of the HOPS complex and may promote assembly of the Syx17-Snap29-Vamp7 trans-SNARE complex.

The protein resides in the early endosome. It localises to the late endosome membrane. Its subcellular location is the lysosome membrane. Functionally, core component of the class C core vacuole/endosome tethering (CORVET) and the homotypic fusion and vacuole protein sorting (HOPS) tethering complexes involved in endo-lysosomal vesicle trafficking and lysosome biogenesis. The CORVET complex facilitates docking and fusion of endosomal vesicles during endosome maturation, acts upstream of HOPS, but is not involved in autophagic flux. The CORVET complex may cooperate with the early endosomal tether Rbsn-5 to mediate endosomal fusion. The HOPS complex facilitates docking and fusion of lysosomes with late endosomes and several other types of vesicles. The HOPS complex is also involved in autophagy and crinophagy (the elimination of unused secretory granules through their fusion with lysosomes). The HOPS complex probably instigates autophagosome-lysosome fusion by binding autophagosome associated Syx17/syntaxin 17 and promoting assembly of the trans-SNARE complex. Independent of Syx17/syntaxin 17 HOPS is involved in biosynthetic transport to lysosomes and lysosome-related organelles such as eye-pigment granules. Required for endocytic degradation of boss/bride of sevenless and N/Notch in developing ommatidia. This chain is Vacuolar protein sorting-associated protein 33A, found in Drosophila melanogaster (Fruit fly).